Reading from the N-terminus, the 444-residue chain is Tubulin beta-4A chain (444 aa).

The short motif at 1-4 (MREI) is the MREI motif element. Residues glutamine 11, glutamate 69, serine 138, glycine 142, threonine 143, and glycine 144 each contribute to the GTP site. Glutamate 69 contributes to the Mg(2+) binding site. Serine 172 is modified (phosphoserine; by CDK1). GTP-binding residues include asparagine 204 and asparagine 226. Glutamate 436 is subject to 5-glutamyl polyglutamate.

This sequence belongs to the tubulin family. As to quaternary structure, dimer of alpha and beta chains. A typical microtubule is a hollow water-filled tube with an outer diameter of 25 nm and an inner diameter of 15 nM. Alpha-beta heterodimers associate head-to-tail to form protofilaments running lengthwise along the microtubule wall with the beta-tubulin subunit facing the microtubule plus end conferring a structural polarity. Microtubules usually have 13 protofilaments but different protofilament numbers can be found in some organisms and specialized cells. Mg(2+) serves as cofactor. Post-translationally, some glutamate residues at the C-terminus are polyglycylated, resulting in polyglycine chains on the gamma-carboxyl group. Glycylation is mainly limited to tubulin incorporated into axonemes (cilia and flagella) whereas glutamylation is prevalent in neuronal cells, centrioles, axonemes, and the mitotic spindle. Both modifications can coexist on the same protein on adjacent residues, and lowering polyglycylation levels increases polyglutamylation, and reciprocally. Cilia and flagella glycylation is required for their stability and maintenance. Flagella glycylation controls sperm motility. Some glutamate residues at the C-terminus are polyglutamylated, resulting in polyglutamate chains on the gamma-carboxyl group. Polyglutamylation plays a key role in microtubule severing by spastin (SPAST). SPAST preferentially recognizes and acts on microtubules decorated with short polyglutamate tails: severing activity by SPAST increases as the number of glutamates per tubulin rises from one to eight, but decreases beyond this glutamylation threshold. Glutamylation is also involved in cilia motility. In terms of processing, phosphorylated on Ser-172 by CDK1 during the cell cycle, from metaphase to telophase, but not in interphase. This phosphorylation inhibits tubulin incorporation into microtubules.

Its subcellular location is the cytoplasm. The protein resides in the cytoskeleton. Tubulin is the major constituent of microtubules, a cylinder consisting of laterally associated linear protofilaments composed of alpha- and beta-tubulin heterodimers. Microtubules grow by the addition of GTP-tubulin dimers to the microtubule end, where a stabilizing cap forms. Below the cap, tubulin dimers are in GDP-bound state, owing to GTPase activity of alpha-tubulin. This Bos taurus (Bovine) protein is Tubulin beta-4A chain (TUBB4A).